An 832-amino-acid polypeptide reads, in one-letter code: Translation initiation factor IF-2 (832 aa).

Residues M1 to E244 are disordered. A compositionally biased stretch (polar residues) spans T18–H27. Basic and acidic residues predominate over residues K81 to A141. Residues S142–A171 show a composition bias toward low complexity. Basic and acidic residues-rich tracts occupy residues P178–R201 and R227–E244. In terms of domain architecture, tr-type G spans P329 to E497. Residues G338–T345 form a G1 region. Residue G338–T345 participates in GTP binding. The interval G363–H367 is G2. The interval D385 to G388 is G3. GTP-binding positions include D385–H389 and N439–D442. The interval N439–D442 is G4. The interval S475 to I477 is G5.

Belongs to the TRAFAC class translation factor GTPase superfamily. Classic translation factor GTPase family. IF-2 subfamily.

Its subcellular location is the cytoplasm. In terms of biological role, one of the essential components for the initiation of protein synthesis. Protects formylmethionyl-tRNA from spontaneous hydrolysis and promotes its binding to the 30S ribosomal subunits. Also involved in the hydrolysis of GTP during the formation of the 70S ribosomal complex. The protein is Translation initiation factor IF-2 of Dinoroseobacter shibae (strain DSM 16493 / NCIMB 14021 / DFL 12).